A 270-amino-acid polypeptide reads, in one-letter code: ATP synthase subunit a 1 (270 aa).

The next 5 membrane-spanning stretches (helical) occupy residues 38 to 58 (VHIDSLFFSWFTGLIFLGIFY), 98 to 118 (IAPLALTIFCWVFLMNVMDLV), 143 to 163 (DVNITMAMALGVFALMIYYSI), 208 to 228 (LFGNMFAGEVVFILCAAMLPW), and 239 to 259 (AIFHILVITIQAFVFMMLTIV).

It belongs to the ATPase A chain family. In terms of assembly, F-type ATPases have 2 components, CF(1) - the catalytic core - and CF(0) - the membrane proton channel. CF(1) has five subunits: alpha(3), beta(3), gamma(1), delta(1), epsilon(1). CF(0) has three main subunits: a(1), b(2) and c(9-12). The alpha and beta chains form an alternating ring which encloses part of the gamma chain. CF(1) is attached to CF(0) by a central stalk formed by the gamma and epsilon chains, while a peripheral stalk is formed by the delta and b chains.

It localises to the cell inner membrane. Functionally, key component of the proton channel; it plays a direct role in the translocation of protons across the membrane. The protein is ATP synthase subunit a 1 of Vibrio campbellii (strain ATCC BAA-1116).